Consider the following 1002-residue polypeptide: Mannan endo-1,4-beta-mannosidase (1002 aa).

An N-terminal signal peptide occupies residues 1 to 28 (MKTTVTKLLATVAAASTIFGMSTLPAFA). The 348-residue stretch at 49 to 396 (AETRALFDKL…ADSNKNLMAS (348 aa)) folds into the GH26 domain. Residue His-144 participates in substrate binding. Catalysis depends on Glu-205, which acts as the Proton donor. Residues Trp-210 and Tyr-278 each contribute to the substrate site. The Nucleophile role is filled by Glu-316. Lys-384 is a substrate binding site. 2 consecutive CBM11 domains span residues 523-703 (VDNV…GKRD) and 717-897 (AKAQ…NEQT). Disordered regions lie at residues 702–722 (RDAY…AQSV) and 888–969 (PAEN…LSRT). Residues 707–719 (PNTNPTPGNTAKA) are compositionally biased toward polar residues. 2 stretches are compositionally biased toward basic and acidic residues: residues 897–913 (TPKD…KEQE) and 952–966 (PDTK…KDGL). Residues 966 to 970 (LSRTG) carry the LPXTG sorting signal motif. The residue at position 969 (Thr-969) is a Pentaglycyl murein peptidoglycan amidated threonine. Residues 970–1002 (GSNIISAIAAVAVLLLGGCAVLIARKRKGGDIE) constitute a propeptide, removed by sortase.

The protein belongs to the glycosyl hydrolase 26 family. As to quaternary structure, homodimer.

Its subcellular location is the secreted. It localises to the cell wall. The enzyme catalyses Random hydrolysis of (1-&gt;4)-beta-D-mannosidic linkages in mannans, galactomannans and glucomannans.. In terms of biological role, beta-mannanase likely involved in the utilization of carbohydrates in the human gut. Catalyzes the hydrolysis of different beta-1,4-linked mannans, such as ivory nut mannan, konjac glucomannan, as well as carob and guar gum galactomannans, to a mixture of oligosaccharides. The dominant product from ivory nut mannan is found to be mannotriose; mannobiose and mannotetraose are produced to a lesser extent. Does not hydrolyze mannobiose, and hydrolyzes mannotriose at a significantly lower rate than the longer oligosaccharides. This Bifidobacterium adolescentis (strain ATCC 15703 / DSM 20083 / NCTC 11814 / E194a) protein is Mannan endo-1,4-beta-mannosidase.